The following is a 556-amino-acid chain: MSVSAFNRRWAAVILEALTRHGVRHICIAPGSRSTPLTLAAAENSAFIHHTHFDERGLGHLALGLAKVSKQPVAVIVTSGTAVANLYPALIEAGLTGEKLILLTADRPPELIDCGANQAIRQPGMFASHPTHSISLPRPTQDIPARWLVSTIDHALGTLHAGGVHINCPFAEPLYGEMDDTGLSWQQRLGDWWQDDKPWLREAPSLESEKQRDWFFWRQKRGVVVAGRMSAEEGKKVALWAQTLGWPLIGDVLSQTGQPLPCADLWLGNAKATSELQQAQIVVQLGSSLTGKRLLQWQASCEPEEYWIVDDIEGRLDPAHHRGRRLIANIADWLELHPAEKRQPWCVEIPRLAEQAMQAVIARRDAFGEAQLAHRISDYLPEQGQLFVGNSLVVRLIDALSQLPAGYPVYSNRGASGIDGLLSTAAGVQRASGKPTLAIVGDLSALYDLNALALLRQVSAPLVLIVVNNNGGQIFSLLPTPQSERERFYLMPQNVHFEHAAAMFELKYHRPQNWQELETAFADAWRTPTTTVIEMVVNDTDGAQTLQQLLAQVSHL.

It belongs to the TPP enzyme family. MenD subfamily. Homodimer. Requires Mg(2+) as cofactor. Mn(2+) serves as cofactor. The cofactor is thiamine diphosphate.

The enzyme catalyses isochorismate + 2-oxoglutarate + H(+) = 5-enolpyruvoyl-6-hydroxy-2-succinyl-cyclohex-3-ene-1-carboxylate + CO2. It participates in quinol/quinone metabolism; 1,4-dihydroxy-2-naphthoate biosynthesis; 1,4-dihydroxy-2-naphthoate from chorismate: step 2/7. Its pathway is quinol/quinone metabolism; menaquinone biosynthesis. In terms of biological role, catalyzes the thiamine diphosphate-dependent decarboxylation of 2-oxoglutarate and the subsequent addition of the resulting succinic semialdehyde-thiamine pyrophosphate anion to isochorismate to yield 2-succinyl-5-enolpyruvyl-6-hydroxy-3-cyclohexene-1-carboxylate (SEPHCHC). The protein is 2-succinyl-5-enolpyruvyl-6-hydroxy-3-cyclohexene-1-carboxylate synthase of Shigella boydii serotype 4 (strain Sb227).